The sequence spans 176 residues: NAD(P)H-quinone oxidoreductase subunit 6, chloroplastic (176 aa).

Transmembrane regions (helical) follow at residues 10-30, 32-52, 61-81, 92-112, and 152-172; these read FLLVFLGSGLILGSLGVVLLT, PIYSAFSLGLVLVCISLFYIL, AQLLIYVGAINILILFAVMFM, LWTVGDGITSLVCTSILVSLM, and FFLPFELISIILLVALIGAIA.

This sequence belongs to the complex I subunit 6 family. In terms of assembly, NDH is composed of at least 16 different subunits, 5 of which are encoded in the nucleus.

The protein localises to the plastid. It is found in the chloroplast thylakoid membrane. The catalysed reaction is a plastoquinone + NADH + (n+1) H(+)(in) = a plastoquinol + NAD(+) + n H(+)(out). It carries out the reaction a plastoquinone + NADPH + (n+1) H(+)(in) = a plastoquinol + NADP(+) + n H(+)(out). NDH shuttles electrons from NAD(P)H:plastoquinone, via FMN and iron-sulfur (Fe-S) centers, to quinones in the photosynthetic chain and possibly in a chloroplast respiratory chain. The immediate electron acceptor for the enzyme in this species is believed to be plastoquinone. Couples the redox reaction to proton translocation, and thus conserves the redox energy in a proton gradient. The polypeptide is NAD(P)H-quinone oxidoreductase subunit 6, chloroplastic (ndhG) (Eucalyptus globulus subsp. globulus (Tasmanian blue gum)).